The chain runs to 351 residues: Cyclic AMP-dependent transcription factor ATF-4 (351 aa).

Lys53 is covalently cross-linked (Glycyl lysine isopeptide (Lys-Gly) (interchain with G-Cter in SUMO2)). The disordered stretch occupies residues 210–268 (EEDTPSDNDSGICMSPESYLGSPQHSPSTRGSPNRSLPSPGVLCGSARPKPYDPPGEKM). Thr213 bears the Phosphothreonine mark. Ser215 carries the post-translational modification Phosphoserine; by CK2. The BetaTrCP degron motif motif lies at 215–224 (SDNDSGICMS). Phosphoserine occurs at positions 219, 224, 231, and 235. Residues 230–246 (GSPQHSPSTRGSPNRSL) are compositionally biased toward polar residues. Pro236 is modified (4-hydroxyproline). Ser245 carries the post-translational modification Phosphoserine; by RPS6KA3. At Ser248 the chain carries Phosphoserine. Residues Lys259, Lys267, and Lys272 each participate in a glycyl lysine isopeptide (Lys-Gly) (interchain with G-Cter in SUMO2) cross-link. In terms of domain architecture, bZIP spans 278–341 (LDKKLKKMEQ…QYLKDLIEEV (64 aa)). Positions 280 to 300 (KKLKKMEQNKTAATRYRQKKR) are basic motif. Residues 280–340 (KKLKKMEQNK…IQYLKDLIEE (61 aa)) adopt a coiled-coil conformation. Residues 305–341 (ALTGECKELEKKNEALKERADSLAKEIQYLKDLIEEV) are interaction with GABBR1. The segment at 306-334 (LTGECKELEKKNEALKERADSLAKEIQYL) is leucine-zipper. An N6-acetyllysine modification is found at Lys311.

Belongs to the bZIP family. As to quaternary structure, binds DNA as a homodimer and as a heterodimer. Heterodimer; heterodimerizes with CEBPB. Heterodimer; heterodimerizes with DDIT3/CHOP. Interacts with CEP290 (via an N-terminal region). Interacts with NEK6, DAPK2 (isoform 2) and ZIPK/DAPK3. Interacts (via its leucine zipper domain) with GABBR1 and GABBR2 (via their C-termini). Forms a heterodimer with TXLNG in osteoblasts. Interacts (via its DNA binding domain) with FOXO1 (C-terminal half); the interaction occurs in osteoblasts and regulates glucose homeostasis through suppression of beta-cell proliferation and a decrease in insulin production. Interacts with SATB2; the interaction results in enhanced DNA binding and transactivation by these transcription factors. Interacts with ABRAXAS2. Interacts with TRIB3, inhibiting the transactivation activity of ATF4. Interacts with DISC1; which inhibits ATF4 transcription factor activity by disrupting ATF4 dimerization and DNA-binding. Interacts with EP300/p300; EP300/p300 stabilizes ATF4 and increases its transcriptional activity independently of its catalytic activity by preventing its ubiquitination. Ubiquitinated by SCF(BTRC) in response to mTORC1 signal, followed by proteasomal degradation and leading to down-regulate expression of SIRT4. Interaction with EP300/p300 inhibits ubiquitination by SCF(BTRC). In terms of processing, phosphorylation at Ser-245 by RPS6KA3/RSK2 in osteoblasts enhances transactivation activity and promotes osteoblast differentiation. Phosphorylated on the betaTrCP degron motif at Ser-219, followed by phosphorylation at Thr-213, Ser-224, Ser-231, Ser-235 and Ser-248, promoting interaction with BTRC and ubiquitination. Phosphorylation is promoted by mTORC1. Phosphorylation at Ser-215 by CK2 decreases its stability. Phosphorylated by NEK6. Post-translationally, hydroxylated by PHD3, leading to decreased protein stability.

The protein localises to the nucleus. The protein resides in the nucleus speckle. Its subcellular location is the cytoplasm. It is found in the cell membrane. It localises to the cytoskeleton. The protein localises to the microtubule organizing center. The protein resides in the centrosome. Functionally, transcription factor that binds the cAMP response element (CRE) (consensus: 5'-GTGACGT[AC][AG]-3') and displays two biological functions, as regulator of metabolic and redox processes under normal cellular conditions, and as master transcription factor during integrated stress response (ISR). Binds to asymmetric CRE's as a heterodimer and to palindromic CRE's as a homodimer. Core effector of the ISR, which is required for adaptation to various stress such as endoplasmic reticulum (ER) stress, amino acid starvation, mitochondrial stress or oxidative stress. During ISR, ATF4 translation is induced via an alternative ribosome translation re-initiation mechanism in response to EIF2S1/eIF-2-alpha phosphorylation, and stress-induced ATF4 acts as a master transcription factor of stress-responsive genes in order to promote cell recovery. Promotes the transcription of genes linked to amino acid sufficiency and resistance to oxidative stress to protect cells against metabolic consequences of ER oxidation. Activates the transcription of NLRP1, possibly in concert with other factors in response to ER stress. Activates the transcription of asparagine synthetase (ASNS) in response to amino acid deprivation or ER stress. However, when associated with DDIT3/CHOP, the transcriptional activation of the ASNS gene is inhibited in response to amino acid deprivation. Together with DDIT3/CHOP, mediates programmed cell death by promoting the expression of genes involved in cellular amino acid metabolic processes, mRNA translation and the terminal unfolded protein response (terminal UPR), a cellular response that elicits programmed cell death when ER stress is prolonged and unresolved. Activates the expression of COX7A2L/SCAF1 downstream of the EIF2AK3/PERK-mediated unfolded protein response, thereby promoting formation of respiratory chain supercomplexes and increasing mitochondrial oxidative phosphorylation. Together with DDIT3/CHOP, activates the transcription of the IRS-regulator TRIB3 and promotes ER stress-induced neuronal cell death by regulating the expression of BBC3/PUMA in response to ER stress. May cooperate with the UPR transcriptional regulator QRICH1 to regulate ER protein homeostasis which is critical for cell viability in response to ER stress. In the absence of stress, ATF4 translation is at low levels and it is required for normal metabolic processes such as embryonic lens formation, fetal liver hematopoiesis, bone development and synaptic plasticity. Acts as a regulator of osteoblast differentiation in response to phosphorylation by RPS6KA3/RSK2: phosphorylation in osteoblasts enhances transactivation activity and promotes expression of osteoblast-specific genes and post-transcriptionally regulates the synthesis of Type I collagen, the main constituent of the bone matrix. Cooperates with FOXO1 in osteoblasts to regulate glucose homeostasis through suppression of beta-cell production and decrease in insulin production. Activates transcription of SIRT4. Regulates the circadian expression of the core clock component PER2 and the serotonin transporter SLC6A4. Binds in a circadian time-dependent manner to the cAMP response elements (CRE) in the SLC6A4 and PER2 promoters and periodically activates the transcription of these genes. Mainly acts as a transcriptional activator in cellular stress adaptation, but it can also act as a transcriptional repressor: acts as a regulator of synaptic plasticity by repressing transcription, thereby inhibiting induction and maintenance of long-term memory. Regulates synaptic functions via interaction with DISC1 in neurons, which inhibits ATF4 transcription factor activity by disrupting ATF4 dimerization and DNA-binding. In terms of biological role, (Microbial infection) Binds to a Tax-responsive enhancer element in the long terminal repeat of HTLV-I. The polypeptide is Cyclic AMP-dependent transcription factor ATF-4 (Homo sapiens (Human)).